The primary structure comprises 163 residues: NADH-quinone oxidoreductase subunit I (163 aa).

2 consecutive 4Fe-4S ferredoxin-type domains span residues 55-84 (RRYE…IESE) and 94-123 (TQYD…ETRV). Positions 64, 67, 70, 74, 103, 106, 109, and 113 each coordinate [4Fe-4S] cluster.

It belongs to the complex I 23 kDa subunit family. NDH-1 is composed of 14 different subunits. Subunits NuoA, H, J, K, L, M, N constitute the membrane sector of the complex. [4Fe-4S] cluster is required as a cofactor.

It localises to the cell inner membrane. It catalyses the reaction a quinone + NADH + 5 H(+)(in) = a quinol + NAD(+) + 4 H(+)(out). Its function is as follows. NDH-1 shuttles electrons from NADH, via FMN and iron-sulfur (Fe-S) centers, to quinones in the respiratory chain. The immediate electron acceptor for the enzyme in this species is believed to be ubiquinone. Couples the redox reaction to proton translocation (for every two electrons transferred, four hydrogen ions are translocated across the cytoplasmic membrane), and thus conserves the redox energy in a proton gradient. The polypeptide is NADH-quinone oxidoreductase subunit I (Hydrogenovibrio crunogenus (strain DSM 25203 / XCL-2) (Thiomicrospira crunogena)).